We begin with the raw amino-acid sequence, 261 residues long: Pyrroline-5-carboxylate reductase (261 aa).

Belongs to the pyrroline-5-carboxylate reductase family.

It is found in the cytoplasm. The catalysed reaction is L-proline + NADP(+) = (S)-1-pyrroline-5-carboxylate + NADPH + 2 H(+). The enzyme catalyses L-proline + NAD(+) = (S)-1-pyrroline-5-carboxylate + NADH + 2 H(+). The protein operates within amino-acid biosynthesis; L-proline biosynthesis; L-proline from L-glutamate 5-semialdehyde: step 1/1. Its function is as follows. Catalyzes the reduction of 1-pyrroline-5-carboxylate (PCA) to L-proline. This chain is Pyrroline-5-carboxylate reductase, found in Thermus thermophilus (strain ATCC BAA-163 / DSM 7039 / HB27).